The sequence spans 88 residues: DNA-directed RNA polymerase subunit omega (88 aa).

Belongs to the RNA polymerase subunit omega family. In terms of assembly, the RNAP catalytic core consists of 2 alpha, 1 beta, 1 beta' and 1 omega subunit. When a sigma factor is associated with the core the holoenzyme is formed, which can initiate transcription.

It catalyses the reaction RNA(n) + a ribonucleoside 5'-triphosphate = RNA(n+1) + diphosphate. Its function is as follows. Promotes RNA polymerase assembly. Latches the N- and C-terminal regions of the beta' subunit thereby facilitating its interaction with the beta and alpha subunits. The protein is DNA-directed RNA polymerase subunit omega of Haemophilus influenzae (strain 86-028NP).